We begin with the raw amino-acid sequence, 264 residues long: Agamous-like MADS-box protein AGL61 (264 aa).

Residues 62–122 (IGRQKIPMVK…KKPFSFGHPS (61 aa)) enclose the MADS-box domain.

In terms of assembly, interacts with PHE1/AGL37, PHE2/AGL38, AGL80 and AGL86. Forms a heterodimer with AGL80. In terms of tissue distribution, expressed exclusively in the central cell of the female gametophyte and in early endosperm.

It is found in the nucleus. Its function is as follows. Probable transcription factor. Controls central cell differentiation during female gametophyte development. The chain is Agamous-like MADS-box protein AGL61 (AGL61) from Arabidopsis thaliana (Mouse-ear cress).